Consider the following 248-residue polypeptide: Deoxyribose-phosphate aldolase (248 aa).

Aspartate 106 acts as the Proton donor/acceptor in catalysis. Residue lysine 168 is the Schiff-base intermediate with acetaldehyde of the active site. Catalysis depends on lysine 197, which acts as the Proton donor/acceptor.

The protein belongs to the DeoC/FbaB aldolase family. DeoC type 1 subfamily.

The protein resides in the cytoplasm. The enzyme catalyses 2-deoxy-D-ribose 5-phosphate = D-glyceraldehyde 3-phosphate + acetaldehyde. Its pathway is carbohydrate degradation; 2-deoxy-D-ribose 1-phosphate degradation; D-glyceraldehyde 3-phosphate and acetaldehyde from 2-deoxy-alpha-D-ribose 1-phosphate: step 2/2. Its function is as follows. Catalyzes a reversible aldol reaction between acetaldehyde and D-glyceraldehyde 3-phosphate to generate 2-deoxy-D-ribose 5-phosphate. The sequence is that of Deoxyribose-phosphate aldolase from Sinorhizobium medicae (strain WSM419) (Ensifer medicae).